Reading from the N-terminus, the 459-residue chain is Cysteine--tRNA ligase (459 aa).

A Zn(2+)-binding site is contributed by C28. The 'HIGH' region signature appears at 30–40; the sequence is VTIYDLCHIGH. Positions 209, 234, and 238 each coordinate Zn(2+). Residues 266–270 carry the 'KMSKS' region motif; it reads KMSKS. K269 provides a ligand contact to ATP.

The protein belongs to the class-I aminoacyl-tRNA synthetase family. In terms of assembly, monomer. Zn(2+) serves as cofactor.

It is found in the cytoplasm. The enzyme catalyses tRNA(Cys) + L-cysteine + ATP = L-cysteinyl-tRNA(Cys) + AMP + diphosphate. In Shewanella baltica (strain OS223), this protein is Cysteine--tRNA ligase.